Reading from the N-terminus, the 143-residue chain is Nucleoside diphosphate kinase (143 aa).

6 residues coordinate ATP: K11, F59, R87, T93, R104, and N114. H117 functions as the Pros-phosphohistidine intermediate in the catalytic mechanism.

The protein belongs to the NDK family. Homotetramer. It depends on Mg(2+) as a cofactor.

It is found in the cytoplasm. The enzyme catalyses a 2'-deoxyribonucleoside 5'-diphosphate + ATP = a 2'-deoxyribonucleoside 5'-triphosphate + ADP. The catalysed reaction is a ribonucleoside 5'-diphosphate + ATP = a ribonucleoside 5'-triphosphate + ADP. In terms of biological role, major role in the synthesis of nucleoside triphosphates other than ATP. The ATP gamma phosphate is transferred to the NDP beta phosphate via a ping-pong mechanism, using a phosphorylated active-site intermediate. In Citrobacter koseri (strain ATCC BAA-895 / CDC 4225-83 / SGSC4696), this protein is Nucleoside diphosphate kinase.